Reading from the N-terminus, the 488-residue chain is UL37 immediate early glycoprotein (488 aa).

An N-terminal signal peptide occupies residues 1–22 (MSPVYVNLLGSVGLLAFWYFSY). Residues 83 to 107 (GEESVTEDTEREDTEEEREDEEEEN) show a composition bias toward acidic residues. Residues 83–119 (GEESVTEDTEREDTEEEREDEEEENEARTPEVNPMDA) are disordered. Residues N206, N210, N219, N223, N242, N275, N281, N294, N297, N306, N333, N337, N343, N384, and N391 are each glycosylated (N-linked (GlcNAc...) asparagine; by host). The helical transmembrane segment at 439–459 (ICTVAAGSIALLSLFCILLIG) threads the bilayer.

It belongs to the immediate early glycoprotein family. Interacts with host BAX. Interacts with host RSAD2/viperin; this interaction results in RSAD2/viperin relocalization from the endoplasmic reticulum to the mitochondria, actin cytoskeleton disruption and enhancement of infection. Interacts with host PEX19; this interaction inhibits the peroxisomal-dependent antiviral signaling. Interacts with host CHCHD6; this interaction rewires mitochondria by engaging the conserved MICOS complex.

Its subcellular location is the host membrane. The protein localises to the host endoplasmic reticulum membrane. It is found in the host Golgi apparatus membrane. It localises to the host mitochondrion membrane. The protein resides in the host peroxisome. Multifunctional transmembrane protein that plays several key roles in viral replication. Rapidely traffics from the host endoplasmic reticulum to the outer mitochondrial membrane where it acts to inhibit host immune response, block apoptotic signaling, regulate calcium flux, and induce mitochondrial fragmentation. Sequesters proapoptotic BAX at the outer mitochondrial membrane and prevents cytochrome c release and subsequent initiation of the proapoptotic cascade. Also provoques a calcium efflux from host endoplasmic reticulum and F-actin cytoskeleton disruption. Participates in the increase of host mitochondrial biogenesis, thus promoting viral replication by efficient use of newly made mitochondria. Additionally, a subset of vMIA localizes to peroxisomes, causing fragmentation and blocking peroxisomal MAVS signaling. Mechanistically, inhibits host MAVS oligomerization at peroxisomes in a mitochondrial fission factors (MFF)-dependent manner and in mitochondria independently of mitochondrial fission factors. Plays an essential role in the trafficking of host viperin/RSAD2 from the endoplasmic reticulum to the viral assembly compartment via the mitochondria during viral infection as failure of viperin to localize to the mitochondria results in insufficient lipogenesis and thus reduces viral replication. Functionally, may play a role in escape from the host antiviral response. This chain is UL37 immediate early glycoprotein (UL37), found in Homo sapiens (Human).